The chain runs to 124 residues: Large ribosomal subunit protein bL12 (124 aa).

The protein belongs to the bacterial ribosomal protein bL12 family. In terms of assembly, homodimer. Part of the ribosomal stalk of the 50S ribosomal subunit. Forms a multimeric L10(L12)X complex, where L10 forms an elongated spine to which 2 to 4 L12 dimers bind in a sequential fashion. Binds GTP-bound translation factors.

Functionally, forms part of the ribosomal stalk which helps the ribosome interact with GTP-bound translation factors. Is thus essential for accurate translation. This Cupriavidus metallidurans (strain ATCC 43123 / DSM 2839 / NBRC 102507 / CH34) (Ralstonia metallidurans) protein is Large ribosomal subunit protein bL12.